The sequence spans 385 residues: Proliferation-associated protein A (385 aa).

The protein belongs to the peptidase M24 family.

This is Proliferation-associated protein A (prlA) from Dictyostelium discoideum (Social amoeba).